Here is a 507-residue protein sequence, read N- to C-terminus: Histidine ammonia-lyase (507 aa).

The segment at residues 141 to 143 is a cross-link (5-imidazolinone (Ala-Gly)); sequence ASG. S142 bears the 2,3-didehydroalanine (Ser) mark.

The protein belongs to the PAL/histidase family. Contains an active site 4-methylidene-imidazol-5-one (MIO), which is formed autocatalytically by cyclization and dehydration of residues Ala-Ser-Gly.

It localises to the cytoplasm. It catalyses the reaction L-histidine = trans-urocanate + NH4(+). It functions in the pathway amino-acid degradation; L-histidine degradation into L-glutamate; N-formimidoyl-L-glutamate from L-histidine: step 1/3. The sequence is that of Histidine ammonia-lyase from Burkholderia pseudomallei (strain 1106a).